The sequence spans 273 residues: Dermonecrotic toxin LsaSicTox-alphaIB1aii (273 aa).

H5 is an active-site residue. Positions 25 and 27 each coordinate Mg(2+). The Nucleophile role is filled by H41. Disulfide bonds link C45–C51 and C47–C190. D85 contacts Mg(2+).

This sequence belongs to the arthropod phospholipase D family. Class II subfamily. The cofactor is Mg(2+). As to expression, expressed by the venom gland.

The protein resides in the secreted. The enzyme catalyses an N-(acyl)-sphingosylphosphocholine = an N-(acyl)-sphingosyl-1,3-cyclic phosphate + choline. The catalysed reaction is an N-(acyl)-sphingosylphosphoethanolamine = an N-(acyl)-sphingosyl-1,3-cyclic phosphate + ethanolamine. It carries out the reaction a 1-acyl-sn-glycero-3-phosphocholine = a 1-acyl-sn-glycero-2,3-cyclic phosphate + choline. It catalyses the reaction a 1-acyl-sn-glycero-3-phosphoethanolamine = a 1-acyl-sn-glycero-2,3-cyclic phosphate + ethanolamine. Functionally, dermonecrotic toxins cleave the phosphodiester linkage between the phosphate and headgroup of certain phospholipids (sphingolipid and lysolipid substrates), forming an alcohol (often choline) and a cyclic phosphate. This toxin acts on sphingomyelin (SM). It may also act on ceramide phosphoethanolamine (CPE), lysophosphatidylcholine (LPC) and lysophosphatidylethanolamine (LPE), but not on lysophosphatidylserine (LPS), and lysophosphatidylglycerol (LPG). It acts by transphosphatidylation, releasing exclusively cyclic phosphate products as second products. Induces dermonecrosis, hemolysis, increased vascular permeability, edema, inflammatory response, and platelet aggregation. The chain is Dermonecrotic toxin LsaSicTox-alphaIB1aii from Loxosceles sabina (Tucson recluse spider).